We begin with the raw amino-acid sequence, 293 residues long: Probable 2-(5''-triphosphoribosyl)-3'-dephosphocoenzyme-A synthase (293 aa).

Belongs to the CitG/MdcB family.

The catalysed reaction is 3'-dephospho-CoA + ATP = 2'-(5''-triphospho-alpha-D-ribosyl)-3'-dephospho-CoA + adenine. Its function is as follows. Involved in the formation of 2-(5''-phosphoribosyl)-3'-dephosphocoenzyme-A, the prosthetic group of the acyl-carrier protein of the malonate decarboxylase. This Pseudomonas paraeruginosa (strain DSM 24068 / PA7) (Pseudomonas aeruginosa (strain PA7)) protein is Probable 2-(5''-triphosphoribosyl)-3'-dephosphocoenzyme-A synthase.